A 346-amino-acid chain; its full sequence is UDP-3-O-acylglucosamine N-acyltransferase (346 aa).

The active-site Proton acceptor is histidine 253.

The protein belongs to the transferase hexapeptide repeat family. LpxD subfamily. Homotrimer.

The catalysed reaction is a UDP-3-O-[(3R)-3-hydroxyacyl]-alpha-D-glucosamine + a (3R)-hydroxyacyl-[ACP] = a UDP-2-N,3-O-bis[(3R)-3-hydroxyacyl]-alpha-D-glucosamine + holo-[ACP] + H(+). The protein operates within bacterial outer membrane biogenesis; LPS lipid A biosynthesis. In terms of biological role, catalyzes the N-acylation of UDP-3-O-acylglucosamine using 3-hydroxyacyl-ACP as the acyl donor. Is involved in the biosynthesis of lipid A, a phosphorylated glycolipid that anchors the lipopolysaccharide to the outer membrane of the cell. The polypeptide is UDP-3-O-acylglucosamine N-acyltransferase (Rickettsia akari (strain Hartford)).